The sequence spans 200 residues: MLILFEPGVCQVDVATGRLKGATNRYVKTFRDLAGLYRDESAYQALIATRGDDVAYEVTDYKPSANGGDIIIGVTRMEPGKIGDEYFMTRGHIHARPNRPEMYYGEAGVGVMLLESPHGEIRTIEMRARTMCYVPPFWIHRSVNVGLEPLVMTFSYPADAGQDYDVIAKAGGMRTVLSMTGTVDGPQSITPVIQGDTHRL.

Residues histidine 92, histidine 94, glutamate 101, and histidine 140 each contribute to the Fe cation site.

It belongs to the archaeal-type GPI family. Homodimer. Fe cation serves as cofactor.

It localises to the cytoplasm. The enzyme catalyses alpha-D-glucose 6-phosphate = beta-D-fructose 6-phosphate. The protein operates within carbohydrate degradation; glycolysis; D-glyceraldehyde 3-phosphate and glycerone phosphate from D-glucose: step 2/4. This Rhizobium meliloti (strain 1021) (Ensifer meliloti) protein is Putative glucose-6-phosphate isomerase 2 (pgiA2).